We begin with the raw amino-acid sequence, 252 residues long: MRVLLSNDDGFHANGIKALKEIVIKSGIASEIWVVAPLNNCSGSGRSVGLNVKVQVSKVSDTEFIVDSTPSTSVFLALRKIMNYKPDLILSGINHGVNIGNDVWYSGTVAAAAEGAAINIPSIAISQEYDNKSGEINWVNPQRFLKQIIEMLMNVSFWNKSTVMNVNFPLMPAKGIKFTDQGKYVPCNEIEKNESSDDSNVSYTITRITPNKKNRAQCDGSIKAIDEGYITITPLKFDMTDFDVLTSLNSLK.

A divalent metal cation contacts are provided by aspartate 8, aspartate 9, serine 42, and asparagine 94.

This sequence belongs to the SurE nucleotidase family. A divalent metal cation is required as a cofactor.

The protein resides in the cytoplasm. It catalyses the reaction a ribonucleoside 5'-phosphate + H2O = a ribonucleoside + phosphate. Functionally, nucleotidase that shows phosphatase activity on nucleoside 5'-monophosphates. This chain is 5'-nucleotidase SurE, found in Ehrlichia ruminantium (strain Welgevonden).